The following is a 386-amino-acid chain: Putative acid--amine ligase YgiC (386 aa).

100 to 102 contacts ATP; sequence RLD. The Mg(2+) site is built by Asp-102, Glu-115, and Asn-117. ATP is bound by residues Lys-267, Lys-302, Gly-309, Gln-336, and 371 to 373; that span reads LIT.

The protein belongs to the glutathionylspermidine synthase preATP-grasp family.

Functionally, may be a ligase forming an amide bond. Shows ATPase activity. This is Putative acid--amine ligase YgiC (ygiC) from Escherichia coli O157:H7.